A 477-amino-acid chain; its full sequence is Trigger factor (477 aa).

Residues 163–248 (ENLVIFDYKA…ITEVKKSEEV (86 aa)) enclose the PPIase FKBP-type domain. Basic and acidic residues predominate over residues 408 to 461 (KAKPSKKEISKEEAEKILKEHQKQDHNHEHDHNHDHDHPEEKKASKSTKIEKKP). Residues 408–477 (KAKPSKKEIS…KPSTKKVSKK (70 aa)) form a disordered region.

Belongs to the FKBP-type PPIase family. Tig subfamily.

It localises to the cytoplasm. It carries out the reaction [protein]-peptidylproline (omega=180) = [protein]-peptidylproline (omega=0). Involved in protein export. Acts as a chaperone by maintaining the newly synthesized protein in an open conformation. Functions as a peptidyl-prolyl cis-trans isomerase. This chain is Trigger factor, found in Pelagibacter ubique (strain HTCC1062).